Here is a 407-residue protein sequence, read N- to C-terminus: Phenazine 1,6-dicarboxylic acid hydroxylase PhzS (407 aa).

Residues glycine 17, valine 134, and aspartate 313 each coordinate FAD.

It depends on FAD as a cofactor.

It catalyses the reaction phenazine-1,6-dicarboxylate + NADH + O2 + 2 H(+) = 6-hydroxyphenazine-1-carboxylate + CO2 + NAD(+) + H2O. The catalysed reaction is 6-hydroxyphenazine-1-carboxylate + NADH + O2 + 2 H(+) = 1,6-dihydroxyphenazine + CO2 + NAD(+) + H2O. It carries out the reaction phenazine-1-carboxylate + NADH + O2 + 2 H(+) = 1-hydroxyphenazine + CO2 + NAD(+) + H2O. Functionally, involved in the biosynthesis of phenazine natural products including myxin, an N(5),N(10)-dioxide phenazine antiobiotic, which has antimicrobial activity. Catalyzes the decarboxylative hydroxylations of phenazine 1,6-dicarboxylic acid (PDC) to produce 1,6-dihydroxyphenazine (DHP). Low activity with phenazine 1-carboxylic acid (PCA) to produce 1-hydroxyphenazine. The sequence is that of Phenazine 1,6-dicarboxylic acid hydroxylase PhzS from Lysobacter antibioticus.